Reading from the N-terminus, the 156-residue chain is Small ribosomal subunit protein uS7 (156 aa).

Belongs to the universal ribosomal protein uS7 family. As to quaternary structure, part of the 30S ribosomal subunit. Contacts proteins S9 and S11.

One of the primary rRNA binding proteins, it binds directly to 16S rRNA where it nucleates assembly of the head domain of the 30S subunit. Is located at the subunit interface close to the decoding center, probably blocks exit of the E-site tRNA. The polypeptide is Small ribosomal subunit protein uS7 (Streptomyces avermitilis (strain ATCC 31267 / DSM 46492 / JCM 5070 / NBRC 14893 / NCIMB 12804 / NRRL 8165 / MA-4680)).